Reading from the N-terminus, the 234-residue chain is Carboxy-S-adenosyl-L-methionine synthase (234 aa).

Residues tyrosine 35, 60-62 (GCS), 109-110 (DV), asparagine 124, and arginine 191 contribute to the S-adenosyl-L-methionine site.

This sequence belongs to the class I-like SAM-binding methyltransferase superfamily. Cx-SAM synthase family. Homodimer.

It carries out the reaction prephenate + S-adenosyl-L-methionine = carboxy-S-adenosyl-L-methionine + 3-phenylpyruvate + H2O. In terms of biological role, catalyzes the conversion of S-adenosyl-L-methionine (SAM) to carboxy-S-adenosyl-L-methionine (Cx-SAM). This chain is Carboxy-S-adenosyl-L-methionine synthase, found in Campylobacter curvus (strain 525.92).